The primary structure comprises 339 residues: tRNA N6-adenosine threonylcarbamoyltransferase (339 aa).

2 residues coordinate Fe cation: His115 and His119. Residues 136–140, Asp168, Glu185, and Ser265 each bind substrate; that span reads LISGG. Fe cation is bound at residue Asp293.

It belongs to the KAE1 / TsaD family. The cofactor is Fe(2+).

It is found in the cytoplasm. The enzyme catalyses L-threonylcarbamoyladenylate + adenosine(37) in tRNA = N(6)-L-threonylcarbamoyladenosine(37) in tRNA + AMP + H(+). Functionally, required for the formation of a threonylcarbamoyl group on adenosine at position 37 (t(6)A37) in tRNAs that read codons beginning with adenine. Is probably involved in the transfer of the threonylcarbamoyl moiety of threonylcarbamoyl-AMP (TC-AMP) to the N6 group of A37. The chain is tRNA N6-adenosine threonylcarbamoyltransferase from Pyrobaculum calidifontis (strain DSM 21063 / JCM 11548 / VA1).